The following is a 153-amino-acid chain: Putative pre-16S rRNA nuclease (153 aa).

It belongs to the YqgF nuclease family.

Its subcellular location is the cytoplasm. In terms of biological role, could be a nuclease involved in processing of the 5'-end of pre-16S rRNA. The polypeptide is Putative pre-16S rRNA nuclease (Prochlorococcus marinus (strain MIT 9301)).